Consider the following 205-residue polypeptide: DNA-directed RNA polymerase RPB5 homolog (205 aa).

The protein belongs to the archaeal RpoH/eukaryotic RPB5 RNA polymerase subunit family. As to quaternary structure, part of the viral DNA-directed RNA polymerase that consists of 8 polII-like subunits (RPB1, RPB2, RPB3, RPB5, RPB6, RPB7, RPB9, RPB10), a capping enzyme and a termination factor.

It is found in the host cytoplasm. The protein localises to the virion. In terms of biological role, component of the DNA-directed RNA polymerase (RNAP) that catalyzes the transcription in the cytoplasm of viral DNA into RNA using the four ribonucleoside triphosphates as substrates. This chain is DNA-directed RNA polymerase RPB5 homolog, found in Ornithodoros (relapsing fever ticks).